A 1174-amino-acid polypeptide reads, in one-letter code: Ankyrin repeat and LEM domain-containing protein 2 homolog (1174 aa).

Composition is skewed to low complexity over residues N37–S56, S150–T164, L174–N198, and Q205–P219. 2 disordered regions span residues N37–P74 and P141–A230. The stretch at R338–L367 is one ANK repeat. Disordered regions lie at residues A519–N543 and G961–I981. Residues A521 to P532 show a composition bias toward polar residues. A compositionally biased stretch (low complexity) spans N533 to N543.

This sequence belongs to the ANKLE2 family.

It localises to the endoplasmic reticulum. The protein localises to the nucleus envelope. Its subcellular location is the cytoplasm. Its function is as follows. Involved in brain development probably by regulating asymmetric division of neuroblasts. Regulates neuroblast asymmetric cell division by controlling asymmetric protein localization of Mira, Baz, Par-6 and aPKC, and spindle alignment. Also, regulates the localization of kinase Ball during mitosis, specifically maintaining Ball in the nucleus during interphase. Required for proper ER and nuclear envelope morphology in neuroblasts. This Drosophila melanogaster (Fruit fly) protein is Ankyrin repeat and LEM domain-containing protein 2 homolog.